Here is a 328-residue protein sequence, read N- to C-terminus: Glucokinase (328 aa).

16–21 (ADIGGT) contributes to the ATP binding site.

The protein belongs to the bacterial glucokinase family.

Its subcellular location is the cytoplasm. The catalysed reaction is D-glucose + ATP = D-glucose 6-phosphate + ADP + H(+). The chain is Glucokinase from Neisseria gonorrhoeae (strain ATCC 700825 / FA 1090).